Consider the following 146-residue polypeptide: Mitochondrial intermembrane space import and assembly protein 40 (146 aa).

Disulfide bonds link C53/C55, C64/C97, and C74/C87. Residues 61 to 105 enclose the CHCH domain; it reads SGPCGQQFKDAFSCFHYSKEEIKGSDCVENFRGMQECMQKYPELY. 2 short sequence motifs (cx9C motif) span residues 64-74 and 87-97; these read CGQQFKDAFSC and CVENFRGMQEC. The segment at 101–146 is disordered; sequence YPELYPQEDDNDSAPSGGANTAPTDSLPASSTDSTAAAATENPATS. Low complexity predominate over residues 123–140; it reads PTDSLPASSTDSTAAAAT.

In terms of assembly, monomer. Can form homooligomers.

Its subcellular location is the mitochondrion intermembrane space. In terms of biological role, central component of a redox-sensitive mitochondrial intermembrane space import machinery which is required for the biogenesis of respiratory chain complexes. Functions as chaperone and catalyzes the formation of disulfide bonds in substrate proteins, such as COX17 or MICU1. Required for the import and folding of small cysteine-containing proteins (small Tim) in the mitochondrial intermembrane space (IMS). Precursor proteins to be imported into the IMS are translocated in their reduced form into the mitochondria. The protein is Mitochondrial intermembrane space import and assembly protein 40 (chchd4) of Danio rerio (Zebrafish).